A 480-amino-acid chain; its full sequence is ATP-dependent rRNA helicase RRP3 (480 aa).

Basic and acidic residues-rich tracts occupy residues 1–17 and 33–46; these read MAKA…KEES and DTTK…EPKK. Positions 1–63 are disordered; the sequence is MAKATEKRVK…VEVDESEEQT (63 aa). Residues 64 to 92 carry the Q motif motif; it reads KTFKDLGVIDSICETCEELKFTKPTPIQA. Residues 95–266 enclose the Helicase ATP-binding domain; that stretch reads IPYALEGRDI…RASLVDPVRV (172 aa). ATP is bound at residue 108–115; it reads AQTGSGKT. The DEAD box motif lies at 214-217; that stretch reads DEAD. The 161-residue stretch at 277-437 folds into the Helicase C-terminal domain; it reads NLLQYMVFCP…SYPLESEAVM (161 aa). The interval 450–480 is disordered; the sequence is AIQEMKGEDGTKKRSKFDKKRRRDEMDIGEQ. The span at 462-471 shows a compositional bias: basic residues; it reads KRSKFDKKRR.

This sequence belongs to the DEAD box helicase family. DDX47/RRP3 subfamily. As to quaternary structure, interacts with the SSU processome.

Its subcellular location is the nucleus. It catalyses the reaction ATP + H2O = ADP + phosphate + H(+). In terms of biological role, ATP-dependent rRNA helicase required for pre-ribosomal RNA processing. Involved in the maturation of the 35S-pre-rRNA and to its cleavage to mature 18S rRNA. This chain is ATP-dependent rRNA helicase RRP3, found in Yarrowia lipolytica (strain CLIB 122 / E 150) (Yeast).